The primary structure comprises 305 residues: 4-hydroxy-tetrahydrodipicolinate synthase 1 (305 aa).

T53 contributes to the pyruvate binding site. Y141 serves as the catalytic Proton donor/acceptor. The active-site Schiff-base intermediate with substrate is the K169. V209 lines the pyruvate pocket.

This sequence belongs to the DapA family. Homotetramer; dimer of dimers.

It localises to the cytoplasm. It carries out the reaction L-aspartate 4-semialdehyde + pyruvate = (2S,4S)-4-hydroxy-2,3,4,5-tetrahydrodipicolinate + H2O + H(+). It functions in the pathway amino-acid biosynthesis; L-lysine biosynthesis via DAP pathway; (S)-tetrahydrodipicolinate from L-aspartate: step 3/4. Functionally, catalyzes the condensation of (S)-aspartate-beta-semialdehyde [(S)-ASA] and pyruvate to 4-hydroxy-tetrahydrodipicolinate (HTPA). This is 4-hydroxy-tetrahydrodipicolinate synthase 1 from Streptomyces coelicolor (strain ATCC BAA-471 / A3(2) / M145).